Reading from the N-terminus, the 122-residue chain is Large ribosomal subunit protein uL14 (122 aa).

The protein belongs to the universal ribosomal protein uL14 family. As to quaternary structure, part of the 50S ribosomal subunit. Forms a cluster with proteins L3 and L19. In the 70S ribosome, L14 and L19 interact and together make contacts with the 16S rRNA in bridges B5 and B8.

In terms of biological role, binds to 23S rRNA. Forms part of two intersubunit bridges in the 70S ribosome. This chain is Large ribosomal subunit protein uL14, found in Paraburkholderia phytofirmans (strain DSM 17436 / LMG 22146 / PsJN) (Burkholderia phytofirmans).